The sequence spans 378 residues: MGQSKKLNKQPSSLSPLVQLAGIRKCFDGKEVIPQLDLTINNGEFLTLLGPSGCGKTTVLRLIAGLETVDSGRIMLDNEDITHVPAENRYVNTVFQSYALFPHMTVFENVAFGLRMQKTPAAEITPRVMEALRMVQLETFAQRKPHQLSGGQQQRVAIARAVVNKPRLLLLDESLSALDYKLRKQMQNELKALQRKLGITFVFVTHDQEEALTMSDRIVVMREGRIEQDGTPREIYEEPKNLFVAGFIGEINMFNATVIERLDEQRVRANVEGRECNIYVNFAVEPGQKLHVLLRPEDLRVEEINDDNHAEGLIGYVRERNYKGMTLESVVELENGKMVMVSEFFNEDDPDFDHSLDQKMAINWVESWEVVLADEEHK.

An ABC transporter domain is found at 18-248 (VQLAGIRKCF…PKNLFVAGFI (231 aa)). 50–57 (GPSGCGKT) is a binding site for ATP.

It belongs to the ABC transporter superfamily. Spermidine/putrescine importer (TC 3.A.1.11.1) family. In terms of assembly, the complex is composed of two ATP-binding proteins (PotA), two transmembrane proteins (PotB and PotC) and a solute-binding protein (PotD).

It is found in the cell inner membrane. It carries out the reaction ATP + H2O + polyamine-[polyamine-binding protein]Side 1 = ADP + phosphate + polyamineSide 2 + [polyamine-binding protein]Side 1.. Part of the ABC transporter complex PotABCD involved in spermidine/putrescine import. Responsible for energy coupling to the transport system. In Shigella boydii serotype 4 (strain Sb227), this protein is Spermidine/putrescine import ATP-binding protein PotA.